Consider the following 215-residue polypeptide: Probable GTP-binding protein EngB (215 aa).

The 185-residue stretch at 31-215 (GPPEIAFAGR…RTAILQAVVQ (185 aa)) folds into the EngB-type G domain. Residues 39–46 (GRSNVGKS), 66–70 (GRTQE), 93–96 (DMPG), 160–163 (TKSD), and 194–196 (TSA) each bind GTP. 2 residues coordinate Mg(2+): serine 46 and threonine 68.

The protein belongs to the TRAFAC class TrmE-Era-EngA-EngB-Septin-like GTPase superfamily. EngB GTPase family. Mg(2+) is required as a cofactor.

In terms of biological role, necessary for normal cell division and for the maintenance of normal septation. This is Probable GTP-binding protein EngB from Bartonella bacilliformis (strain ATCC 35685 / KC583 / Herrer 020/F12,63).